We begin with the raw amino-acid sequence, 389 residues long: 5-amino-6-(D-ribitylamino)uracil--L-tyrosine 4-hydroxyphenyl transferase (389 aa).

One can recognise a Radical SAM core domain in the interval 56–298 (VSYVINRNIN…QAVARLFFGR (243 aa)). Positions 70, 74, and 77 each coordinate [4Fe-4S] cluster.

It belongs to the radical SAM superfamily. CofH family. As to quaternary structure, consists of two subunits, CofG and CofH. [4Fe-4S] cluster serves as cofactor.

The catalysed reaction is 5-amino-6-(D-ribitylamino)uracil + L-tyrosine + S-adenosyl-L-methionine = 5-amino-5-(4-hydroxybenzyl)-6-(D-ribitylimino)-5,6-dihydrouracil + 2-iminoacetate + 5'-deoxyadenosine + L-methionine + H(+). It functions in the pathway cofactor biosynthesis; coenzyme F0 biosynthesis. Its function is as follows. Catalyzes the radical-mediated synthesis of 5-amino-5-(4-hydroxybenzyl)-6-(D-ribitylimino)-5,6-dihydrouracil from 5-amino-6-(D-ribitylamino)uracil and L-tyrosine. The polypeptide is 5-amino-6-(D-ribitylamino)uracil--L-tyrosine 4-hydroxyphenyl transferase (Gloeobacter violaceus (strain ATCC 29082 / PCC 7421)).